The sequence spans 118 residues: MARVTVEDCVDKVPNRFELVMLAAHRAREISAGSELTIDRDNDKNPVVSLREIAEETQSADALRERLIESNQTQIEVDEPEEDSMAMLMGGGQPDKPAEDDMSEEKLLRALMEAQGQP.

The disordered stretch occupies residues 78–104 (DEPEEDSMAMLMGGGQPDKPAEDDMSE).

The protein belongs to the RNA polymerase subunit omega family. The RNAP catalytic core consists of 2 alpha, 1 beta, 1 beta' and 1 omega subunit. When a sigma factor is associated with the core the holoenzyme is formed, which can initiate transcription.

The catalysed reaction is RNA(n) + a ribonucleoside 5'-triphosphate = RNA(n+1) + diphosphate. Its function is as follows. Promotes RNA polymerase assembly. Latches the N- and C-terminal regions of the beta' subunit thereby facilitating its interaction with the beta and alpha subunits. The sequence is that of DNA-directed RNA polymerase subunit omega from Dinoroseobacter shibae (strain DSM 16493 / NCIMB 14021 / DFL 12).